A 410-amino-acid polypeptide reads, in one-letter code: Histone-lysine N-methyltransferase SUV39H2 (410 aa).

The 59-residue stretch at 47–105 (YEVEYLCDYKVVKDMEYYLVKWKGWPDSTNTWEPLQNLKCPLLLQQFFNDKHNYLSQVK) folds into the Chromo domain. The 59-residue stretch at 189 to 247 (FGCSCTDCFFEKCCPAEAGVLLAYNKNQQIKIPPGTPIYECNSRCQCGPDCPNRIVQKG) folds into the Pre-SET domain. Zn(2+) is bound by residues cysteine 191, cysteine 193, cysteine 196, cysteine 201, cysteine 202, cysteine 229, cysteine 233, cysteine 235, and cysteine 239. Residues 250-373 (YSLCIFRTSN…AGEELTFDYQ (124 aa)) form the SET domain. Residues 261 to 263 (CGW), tyrosine 304, and 330 to 331 (NH) contribute to the S-adenosyl-L-methionine site. Cysteine 333 is a binding site for Zn(2+). Phosphoserine is present on residues serine 381, serine 384, and serine 388. In terms of domain architecture, Post-SET spans 394–410 (ARTVCKCGAVTCRGYLN). The Zn(2+) site is built by cysteine 398, cysteine 400, and cysteine 405.

This sequence belongs to the class V-like SAM-binding methyltransferase superfamily. Histone-lysine methyltransferase family. Suvar3-9 subfamily. As to quaternary structure, interacts with SMAD5. The large PER complex involved in the histone methylation is composed of at least PER2, CBX3, TRIM28, SUV39H1 and/or SUV39H2; CBX3 mediates the formation of the complex. Ubiquitinated by the DCX(DCAF13) E3 ubiquitin ligase complex, leading to its degradation.

The protein localises to the nucleus. It localises to the chromosome. The protein resides in the centromere. It carries out the reaction L-lysyl(9)-[histone H3] + 3 S-adenosyl-L-methionine = N(6),N(6),N(6)-trimethyl-L-lysyl(9)-[histone H3] + 3 S-adenosyl-L-homocysteine + 3 H(+). Histone methyltransferase that specifically trimethylates 'Lys-9' of histone H3 using monomethylated H3 'Lys-9' as substrate. H3 'Lys-9' trimethylation represents a specific tag for epigenetic transcriptional repression by recruiting HP1 (CBX1, CBX3 and/or CBX5) proteins to methylated histones. Mainly functions in heterochromatin regions, thereby playing a central role in the establishment of constitutive heterochromatin at pericentric and telomere regions. H3 'Lys-9' trimethylation is also required to direct DNA methylation at pericentric repeats. SUV39H1 is targeted to histone H3 via its interaction with RB1 and is involved in many processes, such as cell cycle regulation, transcriptional repression and regulation of telomere length. May participate in regulation of higher-order chromatin organization during spermatogenesis. Recruited by the large PER complex to the E-box elements of the circadian target genes such as PER2 itself or PER1, contributes to the conversion of local chromatin to a heterochromatin-like repressive state through H3 'Lys-9' trimethylation. The chain is Histone-lysine N-methyltransferase SUV39H2 (SUV39H2) from Bos taurus (Bovine).